A 328-amino-acid chain; its full sequence is MTTSLLLHPRWPESLMYVYEDSAAESGSGGGGGGGGAGGAGGGCSGASPGKAPSMDGLGGSCPASHCRDLLPHPVLARPPAPLGAPQGAVYTDIPAPEAARQCAPPPAPPTSSSATLGYGYPFGGSYYGCRLSHNVNLQQKPCAYHPGDKYPEPSGALPGDDLSSRAKEFAFYPSFASSYQAMPGYLDVSVVPGISGHPEPRHDALIPVEGYQHWALSNGWDSQVYCSKEQSQSAHLWKSPFPDVVPLQPEVSSYRRGRKKRVPYTKVQLKELEKEYAASKFITKEKRRRISATTNLSERQVTIWFQNRRVKEKKVVSKSKAPHLHST.

The segment at Ala23–Ser48 is disordered. Over residues Gly27–Ser45 the composition is skewed to gly residues. Positions Gly258–Val317 form a DNA-binding region, homeobox.

The protein belongs to the Abd-B homeobox family. As to expression, expressed in differentiating keratinocytes. In the hair follicle lower matrix, expressed in all 3 hair shaft-forming compartments, i.e. cuticle, cortex and medulla. Expression stops sharply at the boundary with the germinal matrix compartment.

The protein resides in the nucleus. In terms of biological role, transcription factor which plays a role in hair follicle differentiation. Regulates FOXQ1 expression and that of other hair-specific genes. This chain is Homeobox protein Hox-C13 (Hoxc13), found in Mus musculus (Mouse).